We begin with the raw amino-acid sequence, 184 residues long: Large ribosomal subunit protein uL6 (184 aa).

This sequence belongs to the universal ribosomal protein uL6 family. In terms of assembly, part of the 50S ribosomal subunit.

In terms of biological role, this protein binds to the 23S rRNA, and is important in its secondary structure. It is located near the subunit interface in the base of the L7/L12 stalk, and near the tRNA binding site of the peptidyltransferase center. The protein is Large ribosomal subunit protein uL6 of Onion yellows phytoplasma (strain OY-M).